The chain runs to 2813 residues: von Willebrand factor (2813 aa).

The signal sequence occupies residues 1–22 (MSPTRLVRVLLALALILPGKLC). A propeptide spanning residues 23-763 (TKGTVGRSSM…SSPRSHRSKR (741 aa)) is cleaved from the precursor. The region spanning 33–201 (ARCSLFGGDF…ALSSGEQRCK (169 aa)) is the VWFD 1 domain. Intrachain disulfides connect C35–C162 and C57–C200. 3 N-linked (GlcNAc...) asparagine glycosylation sites follow: N99, N156, and N211. A TIL 1 domain is found at 295–348 (CPAGMEYKECVSPCTRTCQSLHVKEVCQEQCVDGCSCPEGQLLDEGHCVGSAEC). Positions 386 to 560 (GECLVTGQSH…NAWKLLGACE (175 aa)) constitute a VWFD 2 domain. Intrachain disulfides connect C388/C524, C410/C559, and C432/C440. The short motif at 531 to 533 (RGD) is the Cell attachment site element. TIL domains are found at residues 652–707 (CPQG…KAQC) and 776–827 (CPAD…LERC). N666 carries N-linked (GlcNAc...) asparagine glycosylation. Residues 698–700 (RGD) carry the Cell attachment site motif. Residues 764 to 787 (SLSCRPPMVKLVCPADNPRAEGLE) form an amino-terminal region. Intrachain disulfides connect C767–C808, C776–C804, and C810–C821. Positions 788–833 (CAKTCQNYDLQCMSTGCVSGCLCPQGMVRHENRCVALERCPCFHQG) are E1. A CX region spans residues 826–853 (RCPCFHQGQEYAPGETVKIDCNTCVCRD). An N-linked (GlcNAc...) asparagine glycan is attached at N857. The VWFD 3 domain maps to 865–1032 (ATCSAIGMAH…NSWKVNPQCA (168 aa)). Cystine bridges form between C867–C996, C889–C1031, C898–C993, C914–C921, C1060–C1084, C1071–C1111, C1089–C1091, C1126–C1130, C1149–C1169, C1153–C1165, and C1196–C1199. The TIL 4 domain maps to 1146–1196 (YNSCAPACPITCQHPEPLACPVQCVEGCHAHCPPGKILDELLQTCIDPEDC). A glycan (N-linked (GlcNAc...) asparagine) is linked at N1231. Cystine bridges form between C1234–C1237 and C1272–C1458. VWFA domains follow at residues 1277–1453 (DLVF…RDEI) and 1498–1665 (DVVF…PDLV). N1515 and N1574 each carry an N-linked (GlcNAc...) asparagine glycan. 8 disulfides stabilise this stretch: C1669–C1670, C1686–C1872, C1879–C1904, C1899–C1940, C1927–C2088, C1950–C2085, C1972–C2123, and C1993–C2001. The VWFA 3 domain maps to 1691–1871 (DVVLLLDGSS…TLGNSFFHKL (181 aa)). The region spanning 1948–2124 (CVCMGSSTRH…TVQQLGKTCQ (177 aa)) is the VWFD 4 domain. Positions 2216–2261 (CPRLCEGNTSSCGDQPSEGCFCPPNQVMLEGSCVPEEACTQCISED) are E2. N-linked (GlcNAc...) asparagine glycans are attached at residues N2223, N2290, N2357, and N2400. Residues 2255 to 2328 (TQCISEDGVR…CCPEYECVCD (74 aa)) enclose the VWFC 1 domain. Positions 2429–2495 (KVCVHRGTIY…HEGECCGRCL (67 aa)) constitute a VWFC 2 domain. The Cell attachment site signature appears at 2507–2509 (RGD). N-linked (GlcNAc...) asparagine glycans are attached at residues N2546 and N2585. The VWFC 3 domain occupies 2580–2645 (EACLLNGTII…NQGECCGRCL (66 aa)). Disulfide bonds link C2724–C2774, C2739–C2788, C2750–C2804, and C2754–C2806. In terms of domain architecture, CTCK spans 2724–2812 (CKDIIAKLQR…QCRCSPRKCS (89 aa)). Residue N2790 is glycosylated (N-linked (GlcNAc...) asparagine).

In terms of assembly, multimeric. Interacts with F8. In terms of processing, all cysteine residues are involved in intrachain or interchain disulfide bonds. Post-translationally, N- and O-glycosylated. Plasma.

The protein localises to the secreted. The protein resides in the extracellular space. It is found in the extracellular matrix. Its function is as follows. Important in the maintenance of hemostasis, it promotes adhesion of platelets to the sites of vascular injury by forming a molecular bridge between sub-endothelial collagen matrix and platelet-surface receptor complex, glycoprotein Ibalpha/IX/V. Also acts as a chaperone for coagulation factor VIII, delivering it to the site of injury, stabilizing its heterodimeric structure and protecting it from premature clearance from plasma. This is von Willebrand factor (VWF) from Canis lupus familiaris (Dog).